A 269-amino-acid chain; its full sequence is Regulatory protein RecX (269 aa).

The protein belongs to the RecX family.

The protein resides in the cytoplasm. Its function is as follows. Modulates RecA activity. The polypeptide is Regulatory protein RecX (Listeria welshimeri serovar 6b (strain ATCC 35897 / DSM 20650 / CCUG 15529 / CIP 8149 / NCTC 11857 / SLCC 5334 / V8)).